The primary structure comprises 705 residues: Beta-xylosidase (705 aa).

The protein belongs to the glycosyl hydrolase 52 family.

It catalyses the reaction Hydrolysis of (1-&gt;4)-beta-D-xylans, to remove successive D-xylose residues from the non-reducing termini.. It participates in glycan degradation; xylan degradation. In Geobacillus stearothermophilus (Bacillus stearothermophilus), this protein is Beta-xylosidase (xylA).